We begin with the raw amino-acid sequence, 454 residues long: Cathepsin C (454 aa).

The signal sequence occupies residues 1–20; sequence MHWVFHCILIILACLRFTCA. The propeptide occupies 21–217; the sequence is DTPANCTYED…SKELISLTGN (197 aa). Asparagine 25 carries an N-linked (GlcNAc...) asparagine glycan. Disulfide bonds link cysteine 26–cysteine 107, cysteine 244–cysteine 287, and cysteine 280–cysteine 321. The active site involves cysteine 247. A glycan (N-linked (GlcNAc...) asparagine) is linked at asparagine 265. Phenylalanine 291 is a binding site for chloride. Asparagine 326 carries N-linked (GlcNAc...) asparagine glycosylation. Chloride is bound at residue tyrosine 337. Residues histidine 398 and asparagine 420 contribute to the active site.

The protein belongs to the peptidase C1 family. Chloride is required as a cofactor.

It localises to the lysosome. Functionally, thiol protease. Has a role as a digestive enzyme. In Schistosoma mansoni (Blood fluke), this protein is Cathepsin C.